A 347-amino-acid chain; its full sequence is Olfactory receptor 13C3 (347 aa).

At M1–I55 the chain is on the extracellular side. The N-linked (GlcNAc...) asparagine glycan is linked to N35. Residues V56–I76 traverse the membrane as a helical segment. At I77–H84 the chain is on the cytoplasmic side. A helical transmembrane segment spans residues F85–S105. The Extracellular portion of the chain corresponds to S106–V129. C127 and C219 are disulfide-bonded. Residues Q130–F150 form a helical membrane-spanning segment. Topologically, residues D151–V169 are cytoplasmic. A helical transmembrane segment spans residues A170–T190. Over L191–I227 the chain is Extracellular. Residues T228–S247 traverse the membrane as a helical segment. The Cytoplasmic portion of the chain corresponds to Y248–A267. Residues F268 to M288 traverse the membrane as a helical segment. The Extracellular segment spans residues Y289–D307. A helical membrane pass occupies residues K308–L328. At R329 to H347 the chain is on the cytoplasmic side.

It belongs to the G-protein coupled receptor 1 family.

Its subcellular location is the cell membrane. In terms of biological role, odorant receptor. The chain is Olfactory receptor 13C3 (OR13C3) from Homo sapiens (Human).